Consider the following 149-residue polypeptide: Endonuclease I (149 aa).

Homodimer.

The enzyme catalyses Endonucleolytic cleavage to 5'-phosphooligonucleotide end-products.. Junction-resolving enzyme that selectively binds and cleaves four-way (Holliday) DNA junctions present after viral genomic replication. These intermediates are created during DNA repair, processing of stalled replication forks and homologous genetic recombination. Introduces two nicks on the two non-crossing strands, at 5' sides of the junction. Also participates together with gp6 in the degradation of host chromosome to provide nucleotides for phage DNA synthesis. The protein is Endonuclease I of Escherichia coli (Bacteriophage T7).